Reading from the N-terminus, the 501-residue chain is Pentatricopeptide repeat-containing protein At2g36730 (501 aa).

9 PPR repeats span residues 77 to 111, 112 to 146, 147 to 177, 178 to 212, 213 to 243, 246 to 276, 277 to 312, 313 to 343, and 349 to 379; these read TPSTWNMLSRGYSSSDSPVESIWVYSEMKRRGIKP, NKLTFPFLLKACASFLGLTAGRQIQVEVLKHGFDF, DVYVGNNLIHLYGTCKKTSDARKVFDEMTER, NVVSWNSIMTALVENGKLNLVFECFCEMIGKRFCP, DETTMVVLLSACGGNLSLGKLVHSQVMVREL, NCRLGTALVDMYAKSGGLEYARLVFERMVDK, NVWTWSAMIVGLAQYGFAEEALQLFSKMMKESSVRP, NYVTFLGVLCACSHTGLVDDGYKYFHEMEKI, and MMIHYGAMVDILGRAGRLNEAYDFIKKMPFE. Residues 384-462 form a type E motif region; the sequence is VWRTLLSACS…IAGESCLELG (79 aa). The tract at residues 463-493 is type E(+) motif; it reads GSFHRFFSGYDPRSEYVSIYELLDLFKFQLT.

The protein belongs to the PPR family. PCMP-E subfamily.

This chain is Pentatricopeptide repeat-containing protein At2g36730 (PCMP-E44), found in Arabidopsis thaliana (Mouse-ear cress).